The following is a 63-amino-acid chain: GKEGYPVDSRGCKVTCFFTGAGYCDKECKLKKASSGYCAWPACYCYGLPDSVPVYDNASNKCB.

In terms of domain architecture, LCN-type CS-alpha/beta spans 2 to 63 (KEGYPVDSRG…VYDNASNKCB (62 aa)). Cystine bridges form between cysteine 12/cysteine 62, cysteine 16/cysteine 38, cysteine 24/cysteine 43, and cysteine 28/cysteine 45.

Belongs to the long (4 C-C) scorpion toxin superfamily. Sodium channel inhibitor family. Beta subfamily. As to expression, expressed by the venom gland.

It localises to the secreted. Beta toxins bind voltage-independently at site-4 of sodium channels (Nav) and shift the voltage of activation toward more negative potentials thereby affecting sodium channel activation and promoting spontaneous and repetitive firing. This toxin is only active against insects. This is Insect toxin TbIT-1 from Tityus bahiensis (Brazilian scorpion).